The sequence spans 652 residues: Phosphomethylpyrimidine synthase (652 aa).

2 disordered regions span residues 1-45 (MVSR…SVSA) and 118-166 (QRGD…LDGR). Over residues 8–45 (SSSSTSKAVTSSPSTSSLSSAASSPSVSSSSSSSSVSA) the composition is skewed to low complexity. Over residues 134–162 (GASGPGTLGSGTPGSGTPGSGPLGLGGTD) the composition is skewed to gly residues. Substrate is bound by residues Asn-245, Met-274, Tyr-303, His-339, 359 to 361 (SRG), 400 to 403 (DGLR), and Glu-439. His-443 lines the Zn(2+) pocket. Tyr-466 is a binding site for substrate. His-507 is a Zn(2+) binding site. [4Fe-4S] cluster contacts are provided by Cys-587, Cys-590, and Cys-595.

It belongs to the ThiC family. It depends on [4Fe-4S] cluster as a cofactor.

The catalysed reaction is 5-amino-1-(5-phospho-beta-D-ribosyl)imidazole + S-adenosyl-L-methionine = 4-amino-2-methyl-5-(phosphooxymethyl)pyrimidine + CO + 5'-deoxyadenosine + formate + L-methionine + 3 H(+). It functions in the pathway cofactor biosynthesis; thiamine diphosphate biosynthesis. Catalyzes the synthesis of the hydroxymethylpyrimidine phosphate (HMP-P) moiety of thiamine from aminoimidazole ribotide (AIR) in a radical S-adenosyl-L-methionine (SAM)-dependent reaction. The protein is Phosphomethylpyrimidine synthase of Frankia casuarinae (strain DSM 45818 / CECT 9043 / HFP020203 / CcI3).